The following is a 177-amino-acid chain: Co-chaperone protein HscB homolog (177 aa).

Positions 8 to 80 (DFFALFGLPR…LPRAQYMLEL (73 aa)) constitute a J domain.

The protein belongs to the HscB family. Interacts with HscA and stimulates its ATPase activity.

Co-chaperone involved in the maturation of iron-sulfur cluster-containing proteins. Seems to help targeting proteins to be folded toward HscA. In Aromatoleum aromaticum (strain DSM 19018 / LMG 30748 / EbN1) (Azoarcus sp. (strain EbN1)), this protein is Co-chaperone protein HscB homolog.